Reading from the N-terminus, the 291-residue chain is Pantothenate synthetase (291 aa).

An ATP-binding site is contributed by 30 to 37 (MGNLHEGH). The Proton donor role is filled by His-37. Residue Gln-61 coordinates (R)-pantoate. Gln-61 is a beta-alanine binding site. 149–152 (GEKD) lines the ATP pocket. Gln-155 is a (R)-pantoate binding site. Residues Val-178 and 186 to 189 (MSSR) each bind ATP.

This sequence belongs to the pantothenate synthetase family. Homodimer.

It is found in the cytoplasm. The enzyme catalyses (R)-pantoate + beta-alanine + ATP = (R)-pantothenate + AMP + diphosphate + H(+). It participates in cofactor biosynthesis; (R)-pantothenate biosynthesis; (R)-pantothenate from (R)-pantoate and beta-alanine: step 1/1. Catalyzes the condensation of pantoate with beta-alanine in an ATP-dependent reaction via a pantoyl-adenylate intermediate. This chain is Pantothenate synthetase, found in Aliivibrio fischeri (strain ATCC 700601 / ES114) (Vibrio fischeri).